The following is a 294-amino-acid chain: Nucleotide-binding protein LCA_0526 (294 aa).

Gly12–Thr19 serves as a coordination point for ATP. Asp62–Ser65 provides a ligand contact to GTP.

This sequence belongs to the RapZ-like family.

Functionally, displays ATPase and GTPase activities. This Latilactobacillus sakei subsp. sakei (strain 23K) (Lactobacillus sakei subsp. sakei) protein is Nucleotide-binding protein LCA_0526.